The chain runs to 321 residues: PIH1 domain-containing protein 2 (321 aa).

It belongs to the PIH1 family.

This Xenopus tropicalis (Western clawed frog) protein is PIH1 domain-containing protein 2 (pih1d2).